The following is a 501-amino-acid chain: Putative ribose/galactose/methyl galactoside import ATP-binding protein 1 (501 aa).

ABC transporter domains lie at 5-237 (VSLS…VGRQ) and 249-492 (VPGE…MTRS). ATP is bound at residue 37-44 (GENGAGKS).

Belongs to the ABC transporter superfamily. Carbohydrate importer 2 (CUT2) (TC 3.A.1.2) family.

The protein resides in the cell inner membrane. It catalyses the reaction D-ribose(out) + ATP + H2O = D-ribose(in) + ADP + phosphate + H(+). The catalysed reaction is D-galactose(out) + ATP + H2O = D-galactose(in) + ADP + phosphate + H(+). Functionally, part of an ABC transporter complex involved in carbohydrate import. Could be involved in ribose, galactose and/or methyl galactoside import. Responsible for energy coupling to the transport system. The chain is Putative ribose/galactose/methyl galactoside import ATP-binding protein 1 from Rhizobium meliloti (strain 1021) (Ensifer meliloti).